Consider the following 671-residue polypeptide: DNA ligase (671 aa).

NAD(+) is bound by residues 37–41 (DIEYD), 86–87 (SL), and glutamate 117. Catalysis depends on lysine 119, which acts as the N6-AMP-lysine intermediate. NAD(+) contacts are provided by arginine 140, glutamate 177, lysine 295, and lysine 319. Zn(2+) contacts are provided by cysteine 413, cysteine 416, cysteine 431, and cysteine 437. A BRCT domain is found at 594–671 (IISAAVFGKT…DEEEMLNLLK (78 aa)).

Belongs to the NAD-dependent DNA ligase family. LigA subfamily. Requires Mg(2+) as cofactor. Mn(2+) is required as a cofactor.

The catalysed reaction is NAD(+) + (deoxyribonucleotide)n-3'-hydroxyl + 5'-phospho-(deoxyribonucleotide)m = (deoxyribonucleotide)n+m + AMP + beta-nicotinamide D-nucleotide.. Its function is as follows. DNA ligase that catalyzes the formation of phosphodiester linkages between 5'-phosphoryl and 3'-hydroxyl groups in double-stranded DNA using NAD as a coenzyme and as the energy source for the reaction. It is essential for DNA replication and repair of damaged DNA. The chain is DNA ligase from Polynucleobacter asymbioticus (strain DSM 18221 / CIP 109841 / QLW-P1DMWA-1) (Polynucleobacter necessarius subsp. asymbioticus).